A 535-amino-acid polypeptide reads, in one-letter code: E3 ubiquitin-protein ligase rnf168 (535 aa).

An RING-type zinc finger spans residues 16 to 55 (CPICQEILLEPVTLPCKHTLCNPCFQMTVEKASLCCPFCR). The short motif at 112–130 (LCKPGEIRQEYEAEVSKIE) is the LR motif 1 element. A UMI motif motif is present at residues 145–153 (EDYIQKLLA). 2 short sequence motifs (MIU motif) span residues 170–193 (IEEQ…LSNA) and 406–429 (RRKQ…KELK). Positions 429–443 (KQVNRGKGSPDEYQL) are enriched in basic and acidic residues. Residues 429–535 (KQVNRGKGSP…LDLFQRSAGK (107 aa)) are disordered. Residues 433 to 444 (RGKGSPDEYQLR) carry the LR motif 2 motif. Polar residues-rich tracts occupy residues 462–478 (NEQT…QSGY) and 492–507 (ITSS…TNTE).

It belongs to the RNF168 family. Monomer.

It is found in the nucleus. The catalysed reaction is S-ubiquitinyl-[E2 ubiquitin-conjugating enzyme]-L-cysteine + [acceptor protein]-L-lysine = [E2 ubiquitin-conjugating enzyme]-L-cysteine + N(6)-ubiquitinyl-[acceptor protein]-L-lysine.. It participates in protein modification; protein ubiquitination. E3 ubiquitin-protein ligase required for accumulation of repair proteins to sites of DNA damage. Acts with ube2n/ubc13 to amplify the rnf8-dependent histone ubiquitination. Recruited to sites of DNA damage at double-strand breaks (DSBs) by binding to ubiquitinated histone H2A and ubiquitinates histone H2A and H2AX, leading to amplify the rnf8-dependent H2A ubiquitination and promoting the formation of 'Lys-63'-linked ubiquitin conjugates. This leads to concentrate ubiquitinated histones H2A and H2AX at DNA lesions to the threshold required for recruitment of tp53bp1 and brca1. Catalyzes monoubiquitination of 'Lys-13' and 'Lys-15' of nucleosomal histone H2A (H2AK13Ub and H2AK15Ub, respectively). The protein is E3 ubiquitin-protein ligase rnf168 of Xenopus tropicalis (Western clawed frog).